The chain runs to 100 residues: Aspartyl/glutamyl-tRNA(Asn/Gln) amidotransferase subunit C (100 aa).

Belongs to the GatC family. As to quaternary structure, heterotrimer of A, B and C subunits.

It catalyses the reaction L-glutamyl-tRNA(Gln) + L-glutamine + ATP + H2O = L-glutaminyl-tRNA(Gln) + L-glutamate + ADP + phosphate + H(+). The enzyme catalyses L-aspartyl-tRNA(Asn) + L-glutamine + ATP + H2O = L-asparaginyl-tRNA(Asn) + L-glutamate + ADP + phosphate + 2 H(+). Functionally, allows the formation of correctly charged Asn-tRNA(Asn) or Gln-tRNA(Gln) through the transamidation of misacylated Asp-tRNA(Asn) or Glu-tRNA(Gln) in organisms which lack either or both of asparaginyl-tRNA or glutaminyl-tRNA synthetases. The reaction takes place in the presence of glutamine and ATP through an activated phospho-Asp-tRNA(Asn) or phospho-Glu-tRNA(Gln). In Rickettsia felis (strain ATCC VR-1525 / URRWXCal2) (Rickettsia azadi), this protein is Aspartyl/glutamyl-tRNA(Asn/Gln) amidotransferase subunit C.